We begin with the raw amino-acid sequence, 429 residues long: MQESLTLQPIKLINGTLNLPGSKSVSNRALLLAALSEGKTRLTNLLDSDDVRHMLTALAALGVEYHLSSDRTVCEITGLGGAFTASQPLELFLGNAGTAMRPLAAALCLTDGDIVLTGEPRMKERPIGHLVDALRQGGAKIDYLEQENYPPLRLHGGFQGGEISVDGSVSSQFLTALLMTAPLAAQDTQISIQGDLVSKPYIDITLHMMKAFGIEVRNENYQRFFVAGRQQYRSPGDYLVEGDASSASYFLAAAAIKGGVVRVTGVGRNSVQGDIRFADVLERMGAIVRWGEDYIECERGELHAIDMDMNHIPDAAMTIATAALFAQGGTTTLRNIYNWRVKETDRLAAMAIELRKVGAEVEEGNDYIRITPPAKLKAAEIGTYNDHRMAMCFSLVALSDTPVTILDPKCTAKTFPDYFEQLARLSELA.

3-phosphoshikimate is bound by residues lysine 23, serine 24, and arginine 28. Lysine 23 lines the phosphoenolpyruvate pocket. Phosphoenolpyruvate is bound by residues glycine 97 and arginine 125. Positions 170, 171, 172, 198, 314, 338, and 342 each coordinate 3-phosphoshikimate. Glutamine 172 is a binding site for phosphoenolpyruvate. Aspartate 314 serves as the catalytic Proton acceptor. Phosphoenolpyruvate is bound by residues arginine 346, arginine 388, and lysine 413.

It belongs to the EPSP synthase family. As to quaternary structure, monomer.

It is found in the cytoplasm. It catalyses the reaction 3-phosphoshikimate + phosphoenolpyruvate = 5-O-(1-carboxyvinyl)-3-phosphoshikimate + phosphate. It functions in the pathway metabolic intermediate biosynthesis; chorismate biosynthesis; chorismate from D-erythrose 4-phosphate and phosphoenolpyruvate: step 6/7. Functionally, catalyzes the transfer of the enolpyruvyl moiety of phosphoenolpyruvate (PEP) to the 5-hydroxyl of shikimate-3-phosphate (S3P) to produce enolpyruvyl shikimate-3-phosphate and inorganic phosphate. This chain is 3-phosphoshikimate 1-carboxyvinyltransferase, found in Pectobacterium carotovorum subsp. carotovorum (strain PC1).